The sequence spans 286 residues: MQMTAEEKQTSAKIPAERSTCDIYIPPERKAIAGGGKPHVVARDFSIYYGEFEAVKKVNAEILSKYVTAIIGPSGCGKSTFLRAINRMNDLIPNCHTTGALMFDGEDIYGKFTDEVLLRKKIGMVFQKPNPFPKSIFDNIAYGPKLHGIKDKKKLSEIVEKSLRKAALWDEVSDRLDKNALGLSGGQQQRLCVARALAVEPEILLLDEPTSALDPKATAKIEDLIQELRGSYTIMIVTHNMQQASRVSDYTMFFYEGVLVEHAPTTQLFTRPKDSMTEDYITGRFS.

Residues 40–281 form the ABC transporter domain; sequence VVARDFSIYY…PKDSMTEDYI (242 aa). 72-79 contacts ATP; it reads GPSGCGKS.

Belongs to the ABC transporter superfamily. Phosphate importer (TC 3.A.1.7) family. The complex is composed of two ATP-binding proteins (PstB), two transmembrane proteins (PstC and PstA) and a solute-binding protein (PstS).

It is found in the cell inner membrane. The enzyme catalyses phosphate(out) + ATP + H2O = ADP + 2 phosphate(in) + H(+). Its function is as follows. Part of the ABC transporter complex PstSACB involved in phosphate import. Responsible for energy coupling to the transport system. The protein is Phosphate import ATP-binding protein PstB of Chlorobaculum tepidum (strain ATCC 49652 / DSM 12025 / NBRC 103806 / TLS) (Chlorobium tepidum).